We begin with the raw amino-acid sequence, 89 residues long: Small ribosomal subunit protein uS15 (89 aa).

This sequence belongs to the universal ribosomal protein uS15 family. In terms of assembly, part of the 30S ribosomal subunit. Forms a bridge to the 50S subunit in the 70S ribosome, contacting the 23S rRNA.

Its function is as follows. One of the primary rRNA binding proteins, it binds directly to 16S rRNA where it helps nucleate assembly of the platform of the 30S subunit by binding and bridging several RNA helices of the 16S rRNA. Functionally, forms an intersubunit bridge (bridge B4) with the 23S rRNA of the 50S subunit in the ribosome. This Oenococcus oeni (strain ATCC BAA-331 / PSU-1) protein is Small ribosomal subunit protein uS15.